Consider the following 96-residue polypeptide: Co-chaperonin GroES (96 aa).

The protein belongs to the GroES chaperonin family. As to quaternary structure, heptamer of 7 subunits arranged in a ring. Interacts with the chaperonin GroEL.

It is found in the cytoplasm. In terms of biological role, together with the chaperonin GroEL, plays an essential role in assisting protein folding. The GroEL-GroES system forms a nano-cage that allows encapsulation of the non-native substrate proteins and provides a physical environment optimized to promote and accelerate protein folding. GroES binds to the apical surface of the GroEL ring, thereby capping the opening of the GroEL channel. The sequence is that of Co-chaperonin GroES from Geotalea daltonii (strain DSM 22248 / JCM 15807 / FRC-32) (Geobacter daltonii).